We begin with the raw amino-acid sequence, 618 residues long: tRNA 5-methylaminomethyl-2-thiouridine biosynthesis bifunctional protein MnmC (618 aa).

Residues 1 to 231 (MLQTYAPIDF…KRHMLSAVYE (231 aa)) form a tRNA (mnm(5)s(2)U34)-methyltransferase region. The interval 256–618 (IGAGIAGATT…KDIIRGHLNN (363 aa)) is FAD-dependent cmnm(5)s(2)U34 oxidoreductase.

The protein in the N-terminal section; belongs to the methyltransferase superfamily. tRNA (mnm(5)s(2)U34)-methyltransferase family. This sequence in the C-terminal section; belongs to the DAO family. It depends on FAD as a cofactor.

It is found in the cytoplasm. It catalyses the reaction 5-aminomethyl-2-thiouridine(34) in tRNA + S-adenosyl-L-methionine = 5-methylaminomethyl-2-thiouridine(34) in tRNA + S-adenosyl-L-homocysteine + H(+). In terms of biological role, catalyzes the last two steps in the biosynthesis of 5-methylaminomethyl-2-thiouridine (mnm(5)s(2)U) at the wobble position (U34) in tRNA. Catalyzes the FAD-dependent demodification of cmnm(5)s(2)U34 to nm(5)s(2)U34, followed by the transfer of a methyl group from S-adenosyl-L-methionine to nm(5)s(2)U34, to form mnm(5)s(2)U34. The sequence is that of tRNA 5-methylaminomethyl-2-thiouridine biosynthesis bifunctional protein MnmC from Dichelobacter nodosus (strain VCS1703A).